The chain runs to 74 residues: Acyl carrier protein (74 aa).

A Carrier domain is found at 1 to 73 (MAVFEKVQEI…DLVAYVEEKT (73 aa)). S35 is subject to O-(pantetheine 4'-phosphoryl)serine.

Belongs to the acyl carrier protein (ACP) family. In terms of processing, 4'-phosphopantetheine is transferred from CoA to a specific serine of apo-ACP by AcpS. This modification is essential for activity because fatty acids are bound in thioester linkage to the sulfhydryl of the prosthetic group.

The protein localises to the cytoplasm. Its pathway is lipid metabolism; fatty acid biosynthesis. Its function is as follows. Carrier of the growing fatty acid chain in fatty acid biosynthesis. This is Acyl carrier protein from Streptococcus thermophilus (strain CNRZ 1066).